The following is a 339-amino-acid chain: Phosphate acyltransferase (339 aa).

The protein belongs to the PlsX family. Homodimer. Probably interacts with PlsY.

Its subcellular location is the cytoplasm. It carries out the reaction a fatty acyl-[ACP] + phosphate = an acyl phosphate + holo-[ACP]. It functions in the pathway lipid metabolism; phospholipid metabolism. Catalyzes the reversible formation of acyl-phosphate (acyl-PO(4)) from acyl-[acyl-carrier-protein] (acyl-ACP). This enzyme utilizes acyl-ACP as fatty acyl donor, but not acyl-CoA. The polypeptide is Phosphate acyltransferase (Clostridium perfringens (strain ATCC 13124 / DSM 756 / JCM 1290 / NCIMB 6125 / NCTC 8237 / Type A)).